A 303-amino-acid polypeptide reads, in one-letter code: Probable porphobilinogen deaminase (303 aa).

At C233 the chain carries S-(dipyrrolylmethanemethyl)cysteine.

It belongs to the HMBS family. The cofactor is dipyrromethane.

It carries out the reaction 4 porphobilinogen + H2O = hydroxymethylbilane + 4 NH4(+). It participates in porphyrin-containing compound metabolism; protoporphyrin-IX biosynthesis; coproporphyrinogen-III from 5-aminolevulinate: step 2/4. Its function is as follows. Tetrapolymerization of the monopyrrole PBG into the hydroxymethylbilane pre-uroporphyrinogen in several discrete steps. The polypeptide is Probable porphobilinogen deaminase (Methanocella arvoryzae (strain DSM 22066 / NBRC 105507 / MRE50)).